The following is a 105-amino-acid chain: Large ribosomal subunit protein uL24 (105 aa).

It belongs to the universal ribosomal protein uL24 family. Part of the 50S ribosomal subunit.

Functionally, one of two assembly initiator proteins, it binds directly to the 5'-end of the 23S rRNA, where it nucleates assembly of the 50S subunit. One of the proteins that surrounds the polypeptide exit tunnel on the outside of the subunit. The polypeptide is Large ribosomal subunit protein uL24 (Staphylococcus aureus (strain Mu3 / ATCC 700698)).